Reading from the N-terminus, the 637-residue chain is tRNA uridine 5-carboxymethylaminomethyl modification enzyme MnmG (637 aa).

Residues 15–20 (GAGHAG), Ile127, and Ser182 each bind FAD. 276-290 (GPRYCPSIEDKIVRF) is an NAD(+) binding site. Gln373 contributes to the FAD binding site.

Belongs to the MnmG family. As to quaternary structure, homodimer. Heterotetramer of two MnmE and two MnmG subunits. Requires FAD as cofactor.

The protein resides in the cytoplasm. In terms of biological role, NAD-binding protein involved in the addition of a carboxymethylaminomethyl (cmnm) group at the wobble position (U34) of certain tRNAs, forming tRNA-cmnm(5)s(2)U34. This is tRNA uridine 5-carboxymethylaminomethyl modification enzyme MnmG from Streptococcus pneumoniae (strain ATCC BAA-255 / R6).